We begin with the raw amino-acid sequence, 344 residues long: MEGSRRRRGDGCTIVQCYTPRRFVGRWLSGLRSSKGKRDAGEEQEDDTRRYQLAPIRCSTSLNQLVMQDNKQNCRLNKSKEPETNTFESQSRESPLEVGIGSFLLYLVVASKTELDKMTNLRMQMEMFLLNAKEQLQKKDTPMSSNEASGFQFSPQEFSNLASSIFQESSSSVLQEEYTEFEVSEPEDYRRGTDCNSKLQAEVGRLPLGEKAEDRQTKHQIQRQCKLKDNEVTKSHIPEMVVSDERYGVCPYELDKKLHELLETRQQEELVKLETALNRVERRLQEKETEVSWWKDAARLLAQRVPESSRSGLEWCNPDSSTCSERSVPRSYEACSIHRTSFSR.

The residue at position 19 (T19) is a Phosphothreonine; by ASK7. Residue S79 is modified to Phosphoserine; by ASK7. Residues T84 and T86 each carry the phosphothreonine; by ASK7 modification. Phosphoserine; by ASK7 occurs at positions 91 and 94. Phosphothreonine; by ASK7 is present on residues T193, T217, and T233. Residue S235 is modified to Phosphoserine; by ASK7. A coiled-coil region spans residues 262–297 (LETRQQEELVKLETALNRVERRLQEKETEVSWWKDA). Phosphoserine; by ASK7 occurs at positions 308, 309, 320, 321, and 336.

Component of a complex made of POLAR, BASL, ASK7/BIN2 and ASK3/SK12. Interacts with BASL, ASK7/BIN2 and ASK3/SK12. Post-translationally, phosphorylation by ASK7/BIN2 is increases turnover. Expressed in stomatal lineage cells with asymmetric division potential.

The protein resides in the cytoplasm. Its subcellular location is the cell cortex. In terms of biological role, regulates asymmetric cell division (ACD), especially in stomatal-lineage cells. Acts as a stomatal lineage scaffold which regulates subcellular localization and transient polarization of kinases (e.g. ASK7/BIN2 and ASK3/SK12) involved in ACD in a BASL-dependent manner. Promotes the differentiation of both pavement cells and stomata. The sequence is that of Protein POLAR LOCALIZATION DURING ASYMMETRIC DIVISION AND REDISTRIBUTION from Arabidopsis thaliana (Mouse-ear cress).